The primary structure comprises 185 residues: Protein DP71L (185 aa).

A compositionally biased stretch (basic residues) spans 1-15 (MSRRNKKRSRRRRKK). The interval 1–38 (MSRRNKKRSRRRRKKPLNDIQPGPSKSSAQDEPIKSVS) is disordered. 2 important for host CHOP inhibition regions span residues 126-128 (VHF) and 170-174 (LSTVF).

It belongs to the asfivirus DP71L family. Interacts (via C-terminus) with host PPP1CB.

Functionally, interacts with the host phosphatase PP1 catalytic subunit (PPP1CB) and recruits it to dephosphorylate EIF2S1/eIF2alpha and therefore restores the host translation that has been shut-down by the host. Also inhibits the EIF2S1/eIF2alpha-ATF4-DDIT3/CHOP pathway. The polypeptide is Protein DP71L (African swine fever virus (isolate Pig/Kenya/KEN-50/1950) (ASFV)).